Here is a 956-residue protein sequence, read N- to C-terminus: Ubiquitin carboxyl-terminal hydrolase CYLD (956 aa).

The interval 106-593 (CEERFSLFKN…LEIMIGKKKG (488 aa)) is interaction with TRIP. 2 consecutive CAP-Gly domains span residues 153 to 198 (LAER…VFVA) and 253 to 286 (DVLPGKESLGYFVGVDMDNPIGNWDGRFDGVQLC). The interval 309 to 353 (SVTQERRPPKLAFMSRGVGDKGSSSHNKPKATGSTSDPGNRNRSE) is disordered. Residues 330–349 (GSSSHNKPKATGSTSDPGNR) are compositionally biased toward polar residues. Residue Ser387 is modified to Phosphoserine. The tract at residues 392–411 (STDFDRSSPPLQPPPVNSLS) is disordered. The segment at 394–469 (DFDRSSPPLQ…LAMPPGNSHG (76 aa)) is interaction with TRAF2. Ser418 and Ser422 each carry phosphoserine. An interaction with IKBKG/NEMO region spans residues 470 to 684 (LEVGSLAEVK…FTSEEKDPEE (215 aa)). Positions 492-535 (GQPPGLNEVLAGLELEDECAGCTDGTFRGTRYFTCALKKALFVK) constitute a CAP-Gly 3 domain. The region spanning 592 to 950 (KGIQGHYNSC…DAYMCMYQSP (359 aa)) is the USP domain. Residue Cys601 is the Nucleophile of the active site. Positions 781–833 (LEDTPRQCRICGGLAMYECRECYDDPDISAGKIKQFCKTCNTQVHLHPKRLNH) are B-box. Residues Cys788, Cys791, Cys799, Cys802, Cys817, Cys820, His825, and His833 each contribute to the Zn(2+) site. His871 functions as the Proton acceptor in the catalytic mechanism.

The protein belongs to the peptidase C19 family. As to quaternary structure, interacts (via CAP-Gly domain) with IKBKG/NEMO (via proline-rich C-terminal region). Interacts with TRAF2 and TRIP. Interacts with PLK1, DVL1, DVL3, MAVS, TBK1, IKKE and RIGI. Interacts (via CAP-Gly domain) with microtubules. Interacts with HDAC6 and BCL3. Interacts with MAP3K7. Identified in a complex with TRAF6 and SQSTM1. Interacts with OPTN and SQSTM1. Interacts with CEP350. Interacts with RNF31; the interaction is indirect and is mediated via SPATA2. Interacts with SPATA2 (via the PUB domain); the interaction is direct and recruits CYLD to the LUBAC complex, thereby regulating TNF-alpha-induced necroptosis. Post-translationally, phosphorylated on several serine residues by IKKA and/or IKKB in response to immune stimuli. Phosphorylation requires IKBKG. Phosphorylation abolishes TRAF2 deubiquitination, interferes with the activation of Jun kinases, and strongly reduces CD40-dependent gene activation by NF-kappa-B. In terms of processing, ubiquitinated. Polyubiquitinated in hepatocytes treated with palmitic acid. Ubiquitination is mediated by E3 ligase TRIM47 and leads to proteasomal degradation.

The protein localises to the cytoplasm. The protein resides in the perinuclear region. Its subcellular location is the cytoskeleton. It localises to the cell membrane. It is found in the microtubule organizing center. The protein localises to the centrosome. The protein resides in the spindle. Its subcellular location is the cilium basal body. The catalysed reaction is Thiol-dependent hydrolysis of ester, thioester, amide, peptide and isopeptide bonds formed by the C-terminal Gly of ubiquitin (a 76-residue protein attached to proteins as an intracellular targeting signal).. Its function is as follows. Deubiquitinase that specifically cleaves 'Lys-63'- and linear 'Met-1'-linked polyubiquitin chains and is involved in NF-kappa-B activation and TNF-alpha-induced necroptosis. Negatively regulates NF-kappa-B activation by deubiquitinating upstream signaling factors. Contributes to the regulation of cell survival, proliferation and differentiation via its effects on NF-kappa-B activation. Negative regulator of Wnt signaling. Inhibits HDAC6 and thereby promotes acetylation of alpha-tubulin and stabilization of microtubules. Plays a role in the regulation of microtubule dynamics, and thereby contributes to the regulation of cell proliferation, cell polarization, cell migration, and angiogenesis. Required for normal cell cycle progress and normal cytokinesis. Inhibits nuclear translocation of NF-kappa-B. Plays a role in the regulation of inflammation and the innate immune response, via its effects on NF-kappa-B activation. Dispensable for the maturation of intrathymic natural killer cells, but required for the continued survival of immature natural killer cells. Negatively regulates TNFRSF11A signaling and osteoclastogenesis. Involved in the regulation of ciliogenesis, allowing ciliary basal bodies to migrate and dock to the plasma membrane; this process does not depend on NF-kappa-B activation. Ability to remove linear ('Met-1'-linked) polyubiquitin chains regulates innate immunity and TNF-alpha-induced necroptosis: recruited to the LUBAC complex via interaction with SPATA2 and restricts linear polyubiquitin formation on target proteins. Regulates innate immunity by restricting linear polyubiquitin formation on RIPK2 in response to NOD2 stimulation. Involved in TNF-alpha-induced necroptosis by removing linear ('Met-1'-linked) polyubiquitin chains from RIPK1, thereby regulating the kinase activity of RIPK1. Negatively regulates intestinal inflammation by removing 'Lys-63' linked polyubiquitin chain of NLRP6, thereby reducing the interaction between NLRP6 and PYCARD/ASC and formation of the NLRP6 inflammasome. Does not catalyze deubiquitination of heterotypic 'Lys-63'-/'Lys-48'-linked branched ubiquitin chains. Removes 'Lys-63' linked polyubiquitin chain of MAP3K7, which inhibits phosphorylation and blocks downstream activation of the JNK-p38 kinase cascades. Also removes 'Lys-63'-linked polyubiquitin chains of MAP3K1 and MA3P3K3, which inhibit their interaction with MAP2K1 and MAP2K2. This chain is Ubiquitin carboxyl-terminal hydrolase CYLD (CYLD), found in Pongo abelii (Sumatran orangutan).